Reading from the N-terminus, the 430-residue chain is Histidine--tRNA ligase (430 aa).

The protein belongs to the class-II aminoacyl-tRNA synthetase family. Homodimer.

Its subcellular location is the cytoplasm. It catalyses the reaction tRNA(His) + L-histidine + ATP = L-histidyl-tRNA(His) + AMP + diphosphate + H(+). The chain is Histidine--tRNA ligase from Gloeothece citriformis (strain PCC 7424) (Cyanothece sp. (strain PCC 7424)).